The following is a 314-amino-acid chain: MADVGYTSSPAAKEYEAQLGDYFALLKPRVMSLVVFTALVGLQAAPVSVHPVIGFASILFVAIGAGASGALNMWWDADIDAVMRRTANRPIPAGRVQPGEALNLGAALSGLSIMMLALTANFLAAGLLAFTIFFYAVIYSMWLKRWTPQNIVIGGAAGAFPPVIGWVIATGSLSIEAWLMFALIFMWTPPHFWALALFMKSDYDDAGVPMLTVTHGRKKTRAHIIAYTVLLAVLAVGTGFSAIGGPVYLAAALVLNALFLKGAIDIWRRDEDTAIADEYRVEKKFFRLSLWYLFAHFGAILLESALRPFGLGGW.

Transmembrane regions (helical) follow at residues Val-30 to His-50, Pro-51 to Leu-71, Phe-122 to Trp-142, Ile-151 to Gly-171, Trp-178 to Phe-198, Ile-224 to Gly-244, Val-247 to Trp-267, and Phe-285 to Ala-305.

Belongs to the UbiA prenyltransferase family. Protoheme IX farnesyltransferase subfamily. In terms of assembly, interacts with CtaA.

The protein resides in the cell inner membrane. It catalyses the reaction heme b + (2E,6E)-farnesyl diphosphate + H2O = Fe(II)-heme o + diphosphate. The protein operates within porphyrin-containing compound metabolism; heme O biosynthesis; heme O from protoheme: step 1/1. Its function is as follows. Converts heme B (protoheme IX) to heme O by substitution of the vinyl group on carbon 2 of heme B porphyrin ring with a hydroxyethyl farnesyl side group. The chain is Protoheme IX farnesyltransferase from Roseobacter denitrificans (strain ATCC 33942 / OCh 114) (Erythrobacter sp. (strain OCh 114)).